Here is a 208-residue protein sequence, read N- to C-terminus: Small ribosomal subunit protein uS4 (208 aa).

The S4 RNA-binding domain occupies 98–161 (RRLDNVIYRL…RKIPVLAEAQ (64 aa)).

This sequence belongs to the universal ribosomal protein uS4 family. Part of the 30S ribosomal subunit. Contacts protein S5. The interaction surface between S4 and S5 is involved in control of translational fidelity.

One of the primary rRNA binding proteins, it binds directly to 16S rRNA where it nucleates assembly of the body of the 30S subunit. In terms of biological role, with S5 and S12 plays an important role in translational accuracy. The protein is Small ribosomal subunit protein uS4 of Nitratidesulfovibrio vulgaris (strain ATCC 29579 / DSM 644 / CCUG 34227 / NCIMB 8303 / VKM B-1760 / Hildenborough) (Desulfovibrio vulgaris).